Reading from the N-terminus, the 97-residue chain is Cystatin-A (97 aa).

The residue at position 1 (M1) is an N-acetylmethionine. Residues 46–50 carry the Secondary area of contact motif; the sequence is QVVAG.

Belongs to the cystatin family.

It is found in the cytoplasm. In terms of biological role, this is an intracellular thiol proteinase inhibitor. This chain is Cystatin-A (Csta), found in Mus musculus (Mouse).